Here is a 120-residue protein sequence, read N- to C-terminus: NAD(P)H-quinone oxidoreductase subunit 3, chloroplastic (120 aa).

The next 3 membrane-spanning stretches (helical) occupy residues 10 to 30 (FWLFLLIASLIPVSAFSISKI), 64 to 84 (MFALVFVIFDVETVFLYPWAM), and 89 to 109 (LGISAFIEALIFVLILIIGLI).

It belongs to the complex I subunit 3 family. NDH is composed of at least 16 different subunits, 5 of which are encoded in the nucleus.

Its subcellular location is the plastid. The protein localises to the chloroplast thylakoid membrane. The catalysed reaction is a plastoquinone + NADH + (n+1) H(+)(in) = a plastoquinol + NAD(+) + n H(+)(out). The enzyme catalyses a plastoquinone + NADPH + (n+1) H(+)(in) = a plastoquinol + NADP(+) + n H(+)(out). Its function is as follows. NDH shuttles electrons from NAD(P)H:plastoquinone, via FMN and iron-sulfur (Fe-S) centers, to quinones in the photosynthetic chain and possibly in a chloroplast respiratory chain. The immediate electron acceptor for the enzyme in this species is believed to be plastoquinone. Couples the redox reaction to proton translocation, and thus conserves the redox energy in a proton gradient. This is NAD(P)H-quinone oxidoreductase subunit 3, chloroplastic from Angiopteris evecta (Mule's foot fern).